A 313-amino-acid chain; its full sequence is Pyrimidine-specific ribonucleoside hydrolase RihB (313 aa).

The active-site Proton acceptor is D11. Ca(2+) is bound by residues D11, D16, and V124. Substrate-binding residues include Q227 and H239. Residue D240 coordinates Ca(2+).

It belongs to the IUNH family. RihB subfamily. Homotetramer. Requires Ca(2+) as cofactor.

The enzyme catalyses a pyrimidine ribonucleoside + H2O = a pyrimidine nucleobase + D-ribose. In terms of biological role, hydrolyzes cytidine or uridine to ribose and cytosine or uracil, respectively. Has a clear preference for cytidine over uridine. Strictly specific for ribonucleosides. The polypeptide is Pyrimidine-specific ribonucleoside hydrolase RihB (Escherichia coli (strain SE11)).